A 302-amino-acid polypeptide reads, in one-letter code: 4-hydroxy-tetrahydrodipicolinate synthase (302 aa).

Residue Thr49 coordinates pyruvate. Tyr137 acts as the Proton donor/acceptor in catalysis. The active-site Schiff-base intermediate with substrate is Lys166. Ile208 serves as a coordination point for pyruvate.

The protein belongs to the DapA family. As to quaternary structure, homotetramer; dimer of dimers.

It is found in the cytoplasm. The catalysed reaction is L-aspartate 4-semialdehyde + pyruvate = (2S,4S)-4-hydroxy-2,3,4,5-tetrahydrodipicolinate + H2O + H(+). The protein operates within amino-acid biosynthesis; L-lysine biosynthesis via DAP pathway; (S)-tetrahydrodipicolinate from L-aspartate: step 3/4. Functionally, catalyzes the condensation of (S)-aspartate-beta-semialdehyde [(S)-ASA] and pyruvate to 4-hydroxy-tetrahydrodipicolinate (HTPA). This Chloroherpeton thalassium (strain ATCC 35110 / GB-78) protein is 4-hydroxy-tetrahydrodipicolinate synthase.